The primary structure comprises 250 residues: 5'-nucleotidase SurE (250 aa).

A divalent metal cation is bound by residues Asp8, Asp9, Ser39, and Asn95.

This sequence belongs to the SurE nucleotidase family. The cofactor is a divalent metal cation.

The protein localises to the cytoplasm. It carries out the reaction a ribonucleoside 5'-phosphate + H2O = a ribonucleoside + phosphate. Functionally, nucleotidase that shows phosphatase activity on nucleoside 5'-monophosphates. This is 5'-nucleotidase SurE from Cupriavidus necator (strain ATCC 17699 / DSM 428 / KCTC 22496 / NCIMB 10442 / H16 / Stanier 337) (Ralstonia eutropha).